Consider the following 155-residue polypeptide: Aspartate carbamoyltransferase regulatory chain (155 aa).

Zn(2+) is bound by residues cysteine 113, cysteine 118, cysteine 141, and cysteine 144.

The protein belongs to the PyrI family. In terms of assembly, contains catalytic and regulatory chains. Zn(2+) serves as cofactor.

In terms of biological role, involved in allosteric regulation of aspartate carbamoyltransferase. The polypeptide is Aspartate carbamoyltransferase regulatory chain (Methanococcus aeolicus (strain ATCC BAA-1280 / DSM 17508 / OCM 812 / Nankai-3)).